Reading from the N-terminus, the 450-residue chain is MKRRYFGTDGIRGQSNVFPMTPDLAMRVGIAAGTIFRRGNHRHRVVIGKDTRLSGYMLENAMVAGFTAAGLDAFILGPIPTPAVAMLTRSLRCDIGVMISASHNPYEDNGIKLFGPDGYKLSDDIEAEIEDLLEKDLNAQLAKSDDIGRAKRVDGVHDRYIEHAKRTLPRDVTLQGLRVAIDCANGAAYKVAPAVLWELGADVVTIGNEPNGTNINLNCGSTSPVALQKKVDEVRADIGIALDGDADRVIIIDENGSIVDGDQLMAVIAESWAESQQLRGNGIVATVMSNLGLERFLDERGMALARTKVGDRYVVEHMRQHNYNVGGEQSGHIVLSDYGTTGDGLVAALQILAAVKRTGRTVSEVCRRFEPVPQLLRNVRISGGKPLEDIQVQKAIADAEAELARNGRLVIRPSGTEPLIRVMAEGDDRAQIERIVNELIGTISNVRTAA.

The active-site Phosphoserine intermediate is S102. Mg(2+)-binding residues include S102, D243, D245, and D247. Phosphoserine is present on S102.

The protein belongs to the phosphohexose mutase family. The cofactor is Mg(2+). In terms of processing, activated by phosphorylation.

The catalysed reaction is alpha-D-glucosamine 1-phosphate = D-glucosamine 6-phosphate. Catalyzes the conversion of glucosamine-6-phosphate to glucosamine-1-phosphate. In Rhizobium etli (strain ATCC 51251 / DSM 11541 / JCM 21823 / NBRC 15573 / CFN 42), this protein is Phosphoglucosamine mutase.